The following is a 147-amino-acid chain: Large ribosomal subunit protein uL13 (147 aa).

Residues glycine 126 to glutamine 147 are disordered.

Belongs to the universal ribosomal protein uL13 family. In terms of assembly, part of the 50S ribosomal subunit.

Functionally, this protein is one of the early assembly proteins of the 50S ribosomal subunit, although it is not seen to bind rRNA by itself. It is important during the early stages of 50S assembly. The polypeptide is Large ribosomal subunit protein uL13 (Cutibacterium acnes (strain DSM 16379 / KPA171202) (Propionibacterium acnes)).